Consider the following 104-residue polypeptide: Inner membrane protein YjcH (104 aa).

The Cytoplasmic segment spans residues methionine 1–arginine 24. The helical transmembrane segment at phenylalanine 25 to alanine 47 threads the bilayer. Residues proline 48 to valine 61 are Periplasmic-facing. The chain crosses the membrane as a helical span at residues threonine 62 to tryptophan 84. Topologically, residues arginine 85–serine 104 are cytoplasmic.

The protein localises to the cell inner membrane. The chain is Inner membrane protein YjcH (yjcH) from Escherichia coli (strain K12).